The chain runs to 369 residues: uncharacterized protein (369 aa).

This is an uncharacterized protein from Haloarcula marismortui (strain ATCC 43049 / DSM 3752 / JCM 8966 / VKM B-1809) (Halobacterium marismortui).